The chain runs to 71 residues: Small ribosomal subunit protein bS21 (71 aa).

Over residues 50–59 the composition is skewed to basic residues; sequence AAAVKRHAKK. The disordered stretch occupies residues 50-71; it reads AAAVKRHAKKVQREQRRAVRLY. Over residues 60–71 the composition is skewed to basic and acidic residues; sequence VQREQRRAVRLY.

It belongs to the bacterial ribosomal protein bS21 family.

The chain is Small ribosomal subunit protein bS21 from Pseudomonas entomophila (strain L48).